The sequence spans 262 residues: Acyl-[acyl-carrier-protein]--UDP-N-acetylglucosamine O-acyltransferase (262 aa).

It belongs to the transferase hexapeptide repeat family. LpxA subfamily. In terms of assembly, homotrimer.

It localises to the cytoplasm. It catalyses the reaction a (3R)-hydroxyacyl-[ACP] + UDP-N-acetyl-alpha-D-glucosamine = a UDP-3-O-[(3R)-3-hydroxyacyl]-N-acetyl-alpha-D-glucosamine + holo-[ACP]. The protein operates within glycolipid biosynthesis; lipid IV(A) biosynthesis; lipid IV(A) from (3R)-3-hydroxytetradecanoyl-[acyl-carrier-protein] and UDP-N-acetyl-alpha-D-glucosamine: step 1/6. Functionally, involved in the biosynthesis of lipid A, a phosphorylated glycolipid that anchors the lipopolysaccharide to the outer membrane of the cell. The polypeptide is Acyl-[acyl-carrier-protein]--UDP-N-acetylglucosamine O-acyltransferase (Salmonella arizonae (strain ATCC BAA-731 / CDC346-86 / RSK2980)).